We begin with the raw amino-acid sequence, 195 residues long: Thymidine kinase (195 aa).

Residues 9-16 (STMNAGKS) and 87-90 (DEAQ) contribute to the ATP site. E88 acts as the Proton acceptor in catalysis. Residues C145, C147, C182, and H185 each contribute to the Zn(2+) site.

It belongs to the thymidine kinase family. Homotetramer.

The protein resides in the cytoplasm. It carries out the reaction thymidine + ATP = dTMP + ADP + H(+). In Mannheimia succiniciproducens (strain KCTC 0769BP / MBEL55E), this protein is Thymidine kinase.